Here is a 901-residue protein sequence, read N- to C-terminus: Probable inorganic carbon transporter subunit DabA (901 aa).

Cys424, Asp426, His606, and Cys621 together coordinate Zn(2+).

Belongs to the inorganic carbon transporter (TC 9.A.2) DabA family. In terms of assembly, forms a complex with DabB. The cofactor is Zn(2+).

It is found in the cell membrane. Functionally, part of an energy-coupled inorganic carbon pump. The chain is Probable inorganic carbon transporter subunit DabA from Staphylococcus aureus (strain bovine RF122 / ET3-1).